The primary structure comprises 756 residues: MSEVQSPVPTESRLGRISNKILSLRGASYIVGALGLCALIAATTVTLNNNEQLIVAAVCVVIFFVVGRGKSRRTQIFLEVLSALVSLRYLTWRLTETLDFNTWIQGILGVILLMAELYALYMLFLSYFQTIQPLHRAPLPLPDNVDDWPTVDIFIPTYDEQLSIVRLTVLGALGIDWPPDKVNVYILDDGVRPEFEQFAKDCGALYIGRVDVDSAHAKAGNLNHAIKRTSGDYILILDCDHIPTRAFLQIAMGWMVADRKIALMQTPHHFYSPDPFQRNLAVGYRTPPEGNLFYGVIQDGNDFWDATFFCGSCAILRREAIESIGGFAVETVTEDAHTALRMQRRGWSTAYLRIPVASGLATERLTTHIGQRMRWARGMIQIFRVDNPMLGRGLKLGQRLCYLSAMTSFFFAIPRVIFLASPLAFLFAGQNIIAAAPLAVAAYALPHMFHSIATAAKVNKGWRYSFWSEVYETTMALFLVRVTIVTLLFPSKGKFNVTEKGGVLEEEEFDLGATYPNIIFATIMMGGLLIGLFELIVRFNQLDVIARNAYLLNCAWALISLIILFAAIAVGRETKQVRYNHRVEAHIPVTVYDAPAEGQPHTYYNATHGMTQDVSMGGVAVHIPLPDVTTGPVKKRIHAVLDGEEIDIPATMLRCTNGKAVFTWDNNDLDTERDIVRFVFGRADAWLQWNNYEDDRPLRSLWSLLLSIKALFRKKGKIMANSRPKKKPLALPVERREPTTIHSGQTQEGKISRAAS.

4 consecutive transmembrane segments (helical) span residues 27 to 47 (ASYI…TVTL), 49 to 69 (NNEQ…VGRG), 106 to 126 (GILG…LFLS), and 167 to 187 (LTVL…VYIL). The segment at 147-242 (DWPTVDIFIP…YILILDCDHI (96 aa)) is catalytic subdomain A. The active site involves D189. Residues D238 and D240 each coordinate substrate. The interval 319–379 (EAIESIGGFA…GQRMRWARGM (61 aa)) is catalytic subdomain B. The active site involves D335. A run of 5 helical transmembrane segments spans residues 409–429 (FFFA…LFAG), 432–452 (IIAA…FHSI), 470–490 (VYET…LLFP), 517–537 (NIIF…ELIV), and 551–571 (LLNC…IAVG). The 106-residue stretch at 576–681 (QVRYNHRVEA…ERDIVRFVFG (106 aa)) folds into the PilZ domain. The tract at residues 721 to 756 (NSRPKKKPLALPVERREPTTIHSGQTQEGKISRAAS) is disordered. Polar residues predominate over residues 740–756 (TIHSGQTQEGKISRAAS).

Belongs to the glycosyltransferase 2 family. Mg(2+) is required as a cofactor.

The protein resides in the cell inner membrane. It catalyses the reaction [(1-&gt;4)-beta-D-glucosyl](n) + UDP-alpha-D-glucose = [(1-&gt;4)-beta-D-glucosyl](n+1) + UDP + H(+). It participates in glycan metabolism; bacterial cellulose biosynthesis. Its activity is regulated as follows. Activated by bis-(3'-5') cyclic diguanylic acid (c-di-GMP). In terms of biological role, catalytic subunit of cellulose synthase. It polymerizes uridine 5'-diphosphate glucose to cellulose. The thick cellulosic mats generated by this enzyme probably provide a specialized protective environment to the bacterium. The chain is Cellulose synthase catalytic subunit [UDP-forming] (bcsA) from Komagataeibacter sucrofermentans (strain ATCC 700178 / DSM 15973 / CECT 7291 / JCM 9730 / LMG 18788 / BPR 2001) (Acetobacter xylinus subsp. sucrofermentans).